Reading from the N-terminus, the 228-residue chain is CD302 antigen (228 aa).

The first 20 residues, 1 to 20 (MPHAALSSLVLLSLATAIVA), serve as a signal peptide directing secretion. At 21–165 (DCPSSTWVQF…YDKKYLSDNH (145 aa)) the chain is on the extracellular side. One can recognise a C-type lectin domain in the interval 30-149 (FQGSCYAFLQ…CEISSVEGTL (120 aa)). A glycan (N-linked (GlcNAc...) asparagine) is linked at asparagine 107. Cysteine 125 and cysteine 140 are disulfide-bonded. Residues 166–186 (ILISTLVIASTVTLAVLGAII) traverse the membrane as a helical segment. The Cytoplasmic portion of the chain corresponds to 187–228 (WFLYRRNARSGFTSFSPAPLSPYSDGCALVVAEEDEYAVQLD).

The protein localises to the membrane. The protein resides in the cell projection. It localises to the filopodium. It is found in the cytoplasm. Its subcellular location is the cell cortex. The protein localises to the microvillus. Potential multifunctional C-type lectin receptor that may play roles in endocytosis and phagocytosis as well as in cell adhesion and migration. The chain is CD302 antigen (Cd302) from Mus musculus (Mouse).